A 468-amino-acid polypeptide reads, in one-letter code: ATP synthase subunit beta (468 aa).

Residue 148 to 155 (GGAGVGKT) coordinates ATP.

The protein belongs to the ATPase alpha/beta chains family. As to quaternary structure, F-type ATPases have 2 components, CF(1) - the catalytic core - and CF(0) - the membrane proton channel. CF(1) has five subunits: alpha(3), beta(3), gamma(1), delta(1), epsilon(1). CF(0) has three main subunits: a(1), b(2) and c(9-12). The alpha and beta chains form an alternating ring which encloses part of the gamma chain. CF(1) is attached to CF(0) by a central stalk formed by the gamma and epsilon chains, while a peripheral stalk is formed by the delta and b chains.

The protein localises to the cell inner membrane. It carries out the reaction ATP + H2O + 4 H(+)(in) = ADP + phosphate + 5 H(+)(out). Its function is as follows. Produces ATP from ADP in the presence of a proton gradient across the membrane. The catalytic sites are hosted primarily by the beta subunits. This chain is ATP synthase subunit beta, found in Xanthomonas campestris pv. campestris (strain B100).